Reading from the N-terminus, the 737-residue chain is Palmitoyltransferase AKR1 (737 aa).

Residues 1 to 47 (MKQIDSEDSITVPNDTPEDNSASSMQPVMSNLSIEEHQSENEPIEQE) are disordered. Over 1–304 (MKQIDSEDSI…VYFKKSLHTK (304 aa)) the chain is Cytoplasmic. The segment covering 9–33 (SITVPNDTPEDNSASSMQPVMSNLS) has biased composition (polar residues). 6 ANK repeats span residues 54-84 (PLLS…DLKH), 90-119 (ERVS…DVNF), 124-153 (LNAT…DPSV), 157-190 (QGFN…DIDC), 194-223 (NGRT…SVKA), and 227-256 (GGFT…DFFQ). A run of 2 helical transmembrane segments spans residues 305-325 (LVTF…FASI) and 326-346 (HPIF…YTLK). Topologically, residues 347 to 364 (KYVIPAYAQRNTRQSFLK) are cytoplasmic. A helical membrane pass occupies residues 365–385 (TPFLAGVFSGSVFWASYTWLT). At 386–396 (RIMPLTLIEEP) the chain is on the lumenal side. A helical membrane pass occupies residues 397–417 (ITNLLFFAGVVLLASLFVKLV). Over 418 to 493 (RSDPGLIPEE…YNDIGLRNHK (76 aa)) the chain is Cytoplasmic. Positions 450 to 500 (HFCISTWVRKPIRSKFSNFSRALVTRFDHFCPWIYNDIGLRNHKTFLFFIL) constitute a DHHC domain. Cysteine 480 serves as the catalytic S-palmitoyl cysteine intermediate. Residues 494–514 (TFLFFILCLETCIFVFLKLCM) form a helical membrane-spanning segment. Residues 515–547 (EYFDVLEDTFEDDYDLNCGIFGEDLCAGFFFDT) are Lumenal-facing. The chain crosses the membrane as a helical span at residues 548–568 (FTFLVLAWTCFQGIWVGFLTF). Residues 569–737 (VQLFQTAKGV…ERHYLAEEIV (169 aa)) lie on the Cytoplasmic side of the membrane.

The protein belongs to the DHHC palmitoyltransferase family. AKR/ZDHHC17 subfamily.

The protein localises to the early endosome membrane. It localises to the golgi apparatus membrane. It carries out the reaction L-cysteinyl-[protein] + hexadecanoyl-CoA = S-hexadecanoyl-L-cysteinyl-[protein] + CoA. In terms of biological role, palmitoyltransferase specific for casein kinase 1. This chain is Palmitoyltransferase AKR1 (AKR1), found in Lachancea kluyveri (strain ATCC 58438 / CBS 3082 / BCRC 21498 / NBRC 1685 / JCM 7257 / NCYC 543 / NRRL Y-12651) (Yeast).